Reading from the N-terminus, the 100-residue chain is MGALTKADMAERLFEELGLNKREAKEMVEMFFEEIRHSLEDNIPVKLSGFGNFDLRDKSERPGRNPKTGEEIPITARRVVTFRPGQKLKQRVEAYAGTKS.

This sequence belongs to the bacterial histone-like protein family. As to quaternary structure, heterodimer of an alpha and a beta chain.

This protein is one of the two subunits of integration host factor, a specific DNA-binding protein that functions in genetic recombination as well as in transcriptional and translational control. The chain is Integration host factor subunit alpha from Alcanivorax borkumensis (strain ATCC 700651 / DSM 11573 / NCIMB 13689 / SK2).